A 79-amino-acid polypeptide reads, in one-letter code: Sulfur carrier protein TusA (79 aa).

Residue C17 is the Cysteine persulfide intermediate of the active site.

Belongs to the sulfur carrier protein TusA family.

Its subcellular location is the cytoplasm. Sulfur carrier protein which probably makes part of a sulfur-relay system. This is Sulfur carrier protein TusA from Haemophilus influenzae (strain 86-028NP).